A 333-amino-acid chain; its full sequence is Fructose-1,6-bisphosphatase class 1 1 (333 aa).

E81, D100, L102, and D103 together coordinate Mg(2+). Residues 103 to 106 (DGSS) and N191 each bind substrate. E263 contacts Mg(2+).

Belongs to the FBPase class 1 family. Homotetramer. Mg(2+) is required as a cofactor.

It is found in the cytoplasm. The catalysed reaction is beta-D-fructose 1,6-bisphosphate + H2O = beta-D-fructose 6-phosphate + phosphate. The protein operates within carbohydrate biosynthesis; gluconeogenesis. With respect to regulation, fructose-1,6-bisphosphatase II is not light-activated. This chain is Fructose-1,6-bisphosphatase class 1 1, found in Cereibacter sphaeroides (Rhodobacter sphaeroides).